A 258-amino-acid polypeptide reads, in one-letter code: MILKENLTVVSQREIAPRIFEMVLKGDMVAQMQAGQFLHIRVPDASKLLRRPISIADINKEAQEATIIYRIEGRGTAIFSQLKAGDKLDCLGPQGNGFDLSVIDKGQKALIIGGGIGVPPLLEVAKQLCKKGVEAYAVLGFANKDAVILEEKMSQYATVVVTTDDGSYGQKGYVSTVVDNLDFLADAIYACGAPGMLKYVDKKFEKHPHAYLSTEERMACGMGACYACVVHVKGQEDAQNLRVCEDGPIFETGQIILD.

The FAD-binding FR-type domain occupies 2 to 100; sequence ILKENLTVVS…LGPQGNGFDL (99 aa). Residues 51–54, 68–70, and 75–76 each bind FAD; these read RPIS, IYR, and GT. [2Fe-2S] cluster contacts are provided by C220, C225, C228, and C244.

This sequence belongs to the PyrK family. As to quaternary structure, heterotetramer of 2 PyrK and 2 PyrD type B subunits. [2Fe-2S] cluster serves as cofactor. Requires FAD as cofactor.

It participates in pyrimidine metabolism; UMP biosynthesis via de novo pathway; orotate from (S)-dihydroorotate (NAD(+) route): step 1/1. Its function is as follows. Responsible for channeling the electrons from the oxidation of dihydroorotate from the FMN redox center in the PyrD type B subunit to the ultimate electron acceptor NAD(+). The polypeptide is Dihydroorotate dehydrogenase B (NAD(+)), electron transfer subunit (Streptococcus mutans serotype c (strain ATCC 700610 / UA159)).